The following is a 234-amino-acid chain: Putative gustatory receptor clone PTE38 (234 aa).

A helical transmembrane segment spans residues methionine 1–asparagine 11. Topologically, residues aspartate 12–glutamine 42 are extracellular. Cysteine 39 and cysteine 121 form a disulfide bridge. A helical membrane pass occupies residues valine 43–tyrosine 62. At aspartate 63–valine 84 the chain is on the cytoplasmic side. The helical transmembrane segment at methionine 85 to valine 105 threads the bilayer. Residues leucine 106–tyrosine 138 are Extracellular-facing. The helical transmembrane segment at leucine 139–tyrosine 160 threads the bilayer. Topologically, residues isoleucine 161–threonine 182 are cytoplasmic. A helical transmembrane segment spans residues cysteine 183 to isoleucine 202. At serine 203–lysine 212 the chain is on the extracellular side. Residues threonine 213 to leucine 234 traverse the membrane as a helical segment.

Belongs to the G-protein coupled receptor 1 family. In terms of tissue distribution, tongue specific.

It is found in the cell membrane. Its function is as follows. Possible taste receptor. The sequence is that of Putative gustatory receptor clone PTE38 from Rattus norvegicus (Rat).